The sequence spans 319 residues: Ribose-phosphate pyrophosphokinase (319 aa).

ATP contacts are provided by residues Asn-41–Glu-43 and Arg-100–Gln-101. Mg(2+) contacts are provided by His-134 and Asp-175. The active site involves Lys-198. D-ribose 5-phosphate contacts are provided by residues Arg-200, Asp-224, and Asp-228–Ser-232.

It belongs to the ribose-phosphate pyrophosphokinase family. Class I subfamily. In terms of assembly, homohexamer. The cofactor is Mg(2+).

It localises to the cytoplasm. The enzyme catalyses D-ribose 5-phosphate + ATP = 5-phospho-alpha-D-ribose 1-diphosphate + AMP + H(+). It functions in the pathway metabolic intermediate biosynthesis; 5-phospho-alpha-D-ribose 1-diphosphate biosynthesis; 5-phospho-alpha-D-ribose 1-diphosphate from D-ribose 5-phosphate (route I): step 1/1. Involved in the biosynthesis of the central metabolite phospho-alpha-D-ribosyl-1-pyrophosphate (PRPP) via the transfer of pyrophosphoryl group from ATP to 1-hydroxyl of ribose-5-phosphate (Rib-5-P). The polypeptide is Ribose-phosphate pyrophosphokinase (Clostridium acetobutylicum (strain ATCC 824 / DSM 792 / JCM 1419 / IAM 19013 / LMG 5710 / NBRC 13948 / NRRL B-527 / VKM B-1787 / 2291 / W)).